Here is a 41-residue protein sequence, read N- to C-terminus: Large ribosomal subunit protein bL36 (41 aa).

The protein belongs to the bacterial ribosomal protein bL36 family.

The protein is Large ribosomal subunit protein bL36 of Sinorhizobium fredii (strain NBRC 101917 / NGR234).